The following is a 244-amino-acid chain: Capsid protein (244 aa).

The Bipartite nuclear localization signal motif lies at 1-24 (MSTSKRKRADEAQWNKRSTKKKGS). The tract at residues 1 to 39 (MSTSKRKRADEAQWNKRSTKKKGSAPQAKKPGGKGERPS) is disordered.

Belongs to the geminiviridae capsid protein family. In terms of assembly, homomultimer. Interacts with the movement protein. Binds to single-stranded and double-stranded viral DNA.

The protein localises to the virion. It localises to the host nucleus. Its function is as follows. Encapsidates the viral genome into characteristic twinned ('geminate') particles. Binds the genomic viral ssDNA and shuttles it into and out of the cell nucleus. Plays a role in protection of the genome from degradation, virus acquisition and transmission by insect vectors, infectivity, and systemic movement. The CP of monopartite geminiviruses is absolutely essential for virus movement. This chain is Capsid protein, found in Avena sativa (Oat).